The following is a 548-amino-acid chain: MAELTISSDEIRSAIEKYVSSYSPEVSREEVGVVTDTGDGIAHVEGLPSVMTEELLEFPGGIYGVAMNLEAQEVGAVILGESDKIEEGQEVRRTGKVLSVPVGDDFLGRVVNPLGEPIDGLGEITAEENRALELQAATVVQRQGVSEPMQTGIKAIDSMTPIGRGQRQLLIGDRKTGKTTVAVDTIINQKGNWESGDPQKQVRCIYVAIGQKGSTIAGVKRSLEEAGALEYTTIVAAPASDSPGLKWLAPYAGSAIGQHWMYQGKHVLIVFDDLTKQAEAYRAISLLLRRPPGREAYPGDVFYLHSRLLERCAKLSDEMGAGSMTGLPIIETKANDVSAYIPTNVISITDGQCFLQSDLFNSGQRPAIDVGISVSRVGGSAQINAIRKVTGSLKIDLAQFRELEAFSAFASDLDATSKAQLDRGARLMEVLKQGQGEPLPVEEEVVSLFLGTKGHLDSVPVEDVRRFESEFLAHMRRTHDTVLKDIVETKKLSDDGAKTIADTAEEFKKQFTTSSGESAAPSEPEAEALAADEVGQETVKVNRPAPKK.

172–179 is a binding site for ATP; the sequence is GDRKTGKT. A disordered region spans residues 510 to 548; it reads QFTTSSGESAAPSEPEAEALAADEVGQETVKVNRPAPKK. Over residues 514–531 the composition is skewed to low complexity; it reads SSGESAAPSEPEAEALAA.

The protein belongs to the ATPase alpha/beta chains family. As to quaternary structure, F-type ATPases have 2 components, CF(1) - the catalytic core - and CF(0) - the membrane proton channel. CF(1) has five subunits: alpha(3), beta(3), gamma(1), delta(1), epsilon(1). CF(0) has three main subunits: a(1), b(2) and c(9-12). The alpha and beta chains form an alternating ring which encloses part of the gamma chain. CF(1) is attached to CF(0) by a central stalk formed by the gamma and epsilon chains, while a peripheral stalk is formed by the delta and b chains.

It is found in the cell membrane. The catalysed reaction is ATP + H2O + 4 H(+)(in) = ADP + phosphate + 5 H(+)(out). Functionally, produces ATP from ADP in the presence of a proton gradient across the membrane. The alpha chain is a regulatory subunit. The sequence is that of ATP synthase subunit alpha from Saccharopolyspora erythraea (strain ATCC 11635 / DSM 40517 / JCM 4748 / NBRC 13426 / NCIMB 8594 / NRRL 2338).